Here is a 323-residue protein sequence, read N- to C-terminus: Breast cancer metastasis-suppressor 1-like protein (323 aa).

Over residues 1–17 the composition is skewed to basic and acidic residues; sequence MPVHSRGDKKETNHHDE. Residues 1–56 are disordered; that stretch reads MPVHSRGDKKETNHHDEMEVDYAENEGSSSEDEDTESSSVSEDGDSSEMDDEDCER. Over residues 18–53 the composition is skewed to acidic residues; sequence MEVDYAENEGSSSEDEDTESSSVSEDGDSSEMDDED. Coiled coils occupy residues 52-84 and 149-180; these read EDCERRRMECLDEMSNLEKQFTDLKDQLYKERL and EKLLLYDTVQSELEEKIRRLEEDRHSIDITSE. A Phosphoserine modification is found at serine 197. Residues lysine 240 and lysine 246 each participate in a glycyl lysine isopeptide (Lys-Gly) (interchain with G-Cter in SUMO2) cross-link.

Belongs to the BRMS1 family. In terms of assembly, component of the Sin3/HDAC1 corepressor complex at least composed of BRMS1, BRMS1L and ING2/ING1L. Interacts with HDAC and SIN3A.

The protein localises to the nucleus. Its function is as follows. Involved in the histone deacetylase (HDAC1)-dependent transcriptional repression activity. When overexpressed in lung cancer cell line that lacks p53/TP53 expression, inhibits cell growth. In Bos taurus (Bovine), this protein is Breast cancer metastasis-suppressor 1-like protein (BRMS1L).